Consider the following 87-residue polypeptide: Phosphocarrier protein HPr (87 aa).

Residues 1–87 enclose the HPr domain; that stretch reads MASKDFHIVA…AETMTKEGLA (87 aa). The active-site Pros-phosphohistidine intermediate is H15. S46 carries the post-translational modification Phosphoserine; by HPrK/P.

The protein belongs to the HPr family.

Its subcellular location is the cytoplasm. With respect to regulation, phosphorylation on Ser-46 inhibits the phosphoryl transfer from enzyme I to HPr. Its function is as follows. General (non sugar-specific) component of the phosphoenolpyruvate-dependent sugar phosphotransferase system (sugar PTS). This major carbohydrate active-transport system catalyzes the phosphorylation of incoming sugar substrates concomitantly with their translocation across the cell membrane. The phosphoryl group from phosphoenolpyruvate (PEP) is transferred to the phosphoryl carrier protein HPr by enzyme I. Phospho-HPr then transfers it to the PTS EIIA domain. In terms of biological role, P-Ser-HPr interacts with the catabolite control protein A (CcpA), forming a complex that binds to DNA at the catabolite response elements cre, operator sites preceding a large number of catabolite-regulated genes. Thus, P-Ser-HPr is a corepressor in carbon catabolite repression (CCR), a mechanism that allows bacteria to coordinate and optimize the utilization of available carbon sources. P-Ser-HPr also plays a role in inducer exclusion, in which it probably interacts with several non-PTS permeases and inhibits their transport activity. This chain is Phosphocarrier protein HPr (ptsH), found in Streptococcus salivarius.